We begin with the raw amino-acid sequence, 129 residues long: D-ribose pyranase (129 aa).

Histidine 20 (proton donor) is an active-site residue. Substrate-binding positions include aspartate 28, histidine 96, and 118-120 (YAN).

Belongs to the RbsD / FucU family. RbsD subfamily. Homodecamer.

The protein resides in the cytoplasm. It catalyses the reaction beta-D-ribopyranose = beta-D-ribofuranose. It participates in carbohydrate metabolism; D-ribose degradation; D-ribose 5-phosphate from beta-D-ribopyranose: step 1/2. Catalyzes the interconversion of beta-pyran and beta-furan forms of D-ribose. The chain is D-ribose pyranase from Staphylococcus saprophyticus subsp. saprophyticus (strain ATCC 15305 / DSM 20229 / NCIMB 8711 / NCTC 7292 / S-41).